A 394-amino-acid polypeptide reads, in one-letter code: Elongation factor Tu 2 (394 aa).

Residues 10–204 (KPHVNVGTIG…FLDSYIPEPE (195 aa)) enclose the tr-type G domain. A G1 region spans residues 19 to 26 (GHVDHGKT). 19–26 (GHVDHGKT) contacts GTP. Residue T26 coordinates Mg(2+). Residues 60-64 (GITIN) are G2. The tract at residues 81–84 (DCPG) is G3. Residues 81 to 85 (DCPGH) and 136 to 139 (NKCD) contribute to the GTP site. The tract at residues 136–139 (NKCD) is G4. Residues 174-176 (SAL) are G5.

This sequence belongs to the TRAFAC class translation factor GTPase superfamily. Classic translation factor GTPase family. EF-Tu/EF-1A subfamily. Monomer.

Its subcellular location is the cytoplasm. The enzyme catalyses GTP + H2O = GDP + phosphate + H(+). Functionally, GTP hydrolase that promotes the GTP-dependent binding of aminoacyl-tRNA to the A-site of ribosomes during protein biosynthesis. The protein is Elongation factor Tu 2 of Shigella flexneri serotype 5b (strain 8401).